The following is a 1125-amino-acid chain: RGS domain-containing serine/threonine-protein kinase A (1125 aa).

Disordered regions lie at residues 1-77, 96-191, 276-416, and 455-480; these read MKTS…GGNK, RRNS…IVDD, GISP…NNTN, and YVGG…PAPE. Low complexity-rich tracts occupy residues 7 to 30 and 37 to 66; these read SSNS…NNNN and SSKS…LSSG. The span at 121-136 shows a compositional bias: basic and acidic residues; sequence LDSKPPKPFDEKDDPI. Low complexity-rich tracts occupy residues 159–191 and 281–342; these read QPQQ…IVDD and NNNN…LNNS. Over residues 343-361 the composition is skewed to polar residues; it reads PRYLNSSSSPRSMQHLSSK. A compositionally biased stretch (low complexity) spans 362-416; it reads ITTTTTTTTTTTTTTSDDNNGNTNNNISNNNNIINNSNNNSNSNNNNNNNINNTN. The 117-residue stretch at 487-603 folds into the RGS domain; the sequence is KFIETITDPT…ISSPFNPEWK (117 aa). Residues 617-685 show a composition bias toward low complexity; that stretch reads TTTQPINNFN…NNSNGSNTSS (69 aa). Disordered regions lie at residues 617-710 and 723-762; these read TTTQ…KERS and NLSN…SNNN. Positions 690-710 are enriched in basic and acidic residues; that stretch reads ERLDNIKGNRERVDSNGKERS. The span at 723-735 shows a compositional bias: low complexity; that stretch reads NLSNHSNSSSNSN. The segment covering 736-748 has biased composition (basic and acidic residues); it reads GKDKDKDKDKNEN. Low complexity predominate over residues 749-762; it reads TTDNSNNNNNSNNN. The 256-residue stretch at 842 to 1097 folds into the Protein kinase domain; it reads VSIHKWIASG…YLESIIYPSV (256 aa). ATP contacts are provided by residues 848 to 856 and Lys869; that span reads IASGSSGRV. The Proton acceptor role is filled by Asp963.

This sequence belongs to the protein kinase superfamily. TKL Ser/Thr protein kinase family. In terms of processing, autophosphorylated.

The protein localises to the cytoplasm. The protein resides in the cell membrane. It catalyses the reaction L-seryl-[protein] + ATP = O-phospho-L-seryl-[protein] + ADP + H(+). The catalysed reaction is L-threonyl-[protein] + ATP = O-phospho-L-threonyl-[protein] + ADP + H(+). Its activity is regulated as follows. Up-regulated by cAMP. Serine/threonine kinase involved in negative regulation of chemotaxis. The protein is RGS domain-containing serine/threonine-protein kinase A (rckA) of Dictyostelium discoideum (Social amoeba).